A 307-amino-acid chain; its full sequence is N-acetylmuramic acid 6-phosphate etherase (307 aa).

One can recognise an SIS domain in the interval 62–225 (IVSSFNRGGR…STASMIRIGK (164 aa)). Glu90 acts as the Proton donor in catalysis. The active site involves Glu121.

It belongs to the GCKR-like family. MurNAc-6-P etherase subfamily. Homodimer.

The enzyme catalyses N-acetyl-D-muramate 6-phosphate + H2O = N-acetyl-D-glucosamine 6-phosphate + (R)-lactate. The protein operates within amino-sugar metabolism; 1,6-anhydro-N-acetylmuramate degradation. Its pathway is amino-sugar metabolism; N-acetylmuramate degradation. It participates in cell wall biogenesis; peptidoglycan recycling. Its function is as follows. Specifically catalyzes the cleavage of the D-lactyl ether substituent of MurNAc 6-phosphate, producing GlcNAc 6-phosphate and D-lactate. Together with AnmK, is also required for the utilization of anhydro-N-acetylmuramic acid (anhMurNAc) either imported from the medium or derived from its own cell wall murein, and thus plays a role in cell wall recycling. The sequence is that of N-acetylmuramic acid 6-phosphate etherase from Pseudoalteromonas atlantica (strain T6c / ATCC BAA-1087).